A 259-amino-acid polypeptide reads, in one-letter code: Large ribosomal subunit protein uL3m (259 aa).

A mitochondrion-targeting transit peptide spans 1–15 (MQSRFLISPTLIRTF). A compositionally biased stretch (polar residues) spans 176 to 197 (ASHGASLSHRTPGSTGQNTTPS). Residues 176 to 208 (ASHGASLSHRTPGSTGQNTTPSRVLPGRKMAGH) are disordered.

Belongs to the universal ribosomal protein uL3 family. As to quaternary structure, component of the mitochondrial large ribosomal subunit (mt-LSU). Mature yeast 74S mitochondrial ribosomes consist of a small (37S) and a large (54S) subunit. The 37S small subunit contains a 15S ribosomal RNA (15S mt-rRNA) and at least 32 different proteins. The 54S large subunit contains a 21S rRNA (21S mt-rRNA) and at least 45 different proteins.

The protein resides in the cytoplasm. Its subcellular location is the mitochondrion. Its function is as follows. Component of the mitochondrial ribosome (mitoribosome), a dedicated translation machinery responsible for the synthesis of mitochondrial genome-encoded proteins, including at least some of the essential transmembrane subunits of the mitochondrial respiratory chain. The mitoribosomes are attached to the mitochondrial inner membrane and translation products are cotranslationally integrated into the membrane. The sequence is that of Large ribosomal subunit protein uL3m (mrpl9) from Schizosaccharomyces pombe (strain 972 / ATCC 24843) (Fission yeast).